Reading from the N-terminus, the 118-residue chain is Large ribosomal subunit protein bL20 (118 aa).

The protein belongs to the bacterial ribosomal protein bL20 family.

Binds directly to 23S ribosomal RNA and is necessary for the in vitro assembly process of the 50S ribosomal subunit. It is not involved in the protein synthesizing functions of that subunit. The protein is Large ribosomal subunit protein bL20 of Methylibium petroleiphilum (strain ATCC BAA-1232 / LMG 22953 / PM1).